The chain runs to 329 residues: Legumin type B (329 aa).

2 disordered regions span residues 47–79 (PETQ…EDGN) and 97–149 (EEDT…GRNG). The span at 99–112 (DTAKRLRSPRDKRN) shows a compositional bias: basic and acidic residues. Acidic residues predominate over residues 129–138 (QQEEEEEEEE). Residues 161–308 (ENIAQPARAD…AFGLRQRQVT (148 aa)) form the Cupin type-1 domain.

This sequence belongs to the 11S seed storage protein (globulins) family. In terms of assembly, hexamer; each subunit is composed of an acidic and a basic chain derived from a single precursor and linked by a disulfide bond.

This protein found in the seeds of many leguminous and non-leguminous plants is the source of sulfur-containing amino acids in seed meals. This Vicia faba (Broad bean) protein is Legumin type B (LEB6).